Consider the following 346-residue polypeptide: Zinc-type alcohol dehydrogenase-like protein C1773.06c (346 aa).

This sequence belongs to the zinc-containing alcohol dehydrogenase family. Quinone oxidoreductase subfamily.

It localises to the cytoplasm. This chain is Zinc-type alcohol dehydrogenase-like protein C1773.06c, found in Schizosaccharomyces pombe (strain 972 / ATCC 24843) (Fission yeast).